The sequence spans 196 residues: Small ribosomal subunit protein uS4m (196 aa).

Positions K88 to Q154 constitute an S4 RNA-binding domain.

Belongs to the universal ribosomal protein uS4 family.

It localises to the mitochondrion. The chain is Small ribosomal subunit protein uS4m (RPS4) from Marchantia polymorpha (Common liverwort).